The chain runs to 120 residues: Large ribosomal subunit protein uL14 (120 aa).

The protein belongs to the universal ribosomal protein uL14 family. In terms of assembly, part of the 50S ribosomal subunit. Forms a cluster with proteins L3 and L19. In the 70S ribosome, L14 and L19 interact and together make contacts with the 16S rRNA in bridges B5 and B8.

Its function is as follows. Binds to 23S rRNA. Forms part of two intersubunit bridges in the 70S ribosome. This chain is Large ribosomal subunit protein uL14, found in Dictyoglomus turgidum (strain DSM 6724 / Z-1310).